Here is a 167-residue protein sequence, read N- to C-terminus: NAD(P)H-quinone oxidoreductase subunit I, chloroplastic (167 aa).

4Fe-4S ferredoxin-type domains lie at 55 to 84 (GRIH…VDWI) and 95 to 124 (KNYS…MTEE). Cysteine 64, cysteine 67, cysteine 70, cysteine 74, cysteine 104, cysteine 107, cysteine 110, and cysteine 114 together coordinate [4Fe-4S] cluster.

The protein belongs to the complex I 23 kDa subunit family. As to quaternary structure, NDH is composed of at least 16 different subunits, 5 of which are encoded in the nucleus. The cofactor is [4Fe-4S] cluster.

The protein resides in the plastid. It localises to the chloroplast thylakoid membrane. The enzyme catalyses a plastoquinone + NADH + (n+1) H(+)(in) = a plastoquinol + NAD(+) + n H(+)(out). It catalyses the reaction a plastoquinone + NADPH + (n+1) H(+)(in) = a plastoquinol + NADP(+) + n H(+)(out). Functionally, NDH shuttles electrons from NAD(P)H:plastoquinone, via FMN and iron-sulfur (Fe-S) centers, to quinones in the photosynthetic chain and possibly in a chloroplast respiratory chain. The immediate electron acceptor for the enzyme in this species is believed to be plastoquinone. Couples the redox reaction to proton translocation, and thus conserves the redox energy in a proton gradient. This is NAD(P)H-quinone oxidoreductase subunit I, chloroplastic from Adiantum capillus-veneris (Maidenhair fern).